Reading from the N-terminus, the 311-residue chain is Methionyl-tRNA formyltransferase (311 aa).

110 to 113 (SLLP) contacts (6S)-5,6,7,8-tetrahydrofolate.

It belongs to the Fmt family.

It catalyses the reaction L-methionyl-tRNA(fMet) + (6R)-10-formyltetrahydrofolate = N-formyl-L-methionyl-tRNA(fMet) + (6S)-5,6,7,8-tetrahydrofolate + H(+). Attaches a formyl group to the free amino group of methionyl-tRNA(fMet). The formyl group appears to play a dual role in the initiator identity of N-formylmethionyl-tRNA by promoting its recognition by IF2 and preventing the misappropriation of this tRNA by the elongation apparatus. This Streptococcus thermophilus (strain ATCC BAA-250 / LMG 18311) protein is Methionyl-tRNA formyltransferase.